The following is a 257-amino-acid chain: Homeobox protein goosecoid (257 aa).

Residues 160 to 219 constitute a DNA-binding region (homeobox); it reads KRRHRTIFTDEQLEALENLFQETKYPDVGTREQLARKVHLREEKVEVWFKNRRAKWRRQK. Residues 213-257 form a disordered region; it reads AKWRRQKRSSSEESENAEKWNKTSSSKASPEKREEEGKSDLDSDS. A compositionally biased stretch (basic and acidic residues) spans 241–257; that stretch reads SPEKREEEGKSDLDSDS.

Belongs to the paired homeobox family. Bicoid subfamily.

Its subcellular location is the nucleus. Functionally, regulates chordin (CHRD). May play a role in spatial programing within discrete embryonic fields or lineage compartments during organogenesis. In concert with NKX3-2, plays a role in defining the structural components of the middle ear; required for the development of the entire tympanic ring. Probably involved in the regulatory networks that define neural crest cell fate specification and determine mesoderm cell lineages in mammals. The polypeptide is Homeobox protein goosecoid (GSC) (Homo sapiens (Human)).